Consider the following 188-residue polypeptide: HGPRTase-like protein 1 (188 aa).

It belongs to the purine/pyrimidine phosphoribosyltransferase family. Archaeal HPRT subfamily.

Its function is as follows. May catalyze a purine salvage reaction, the substrate is unknown. The sequence is that of HGPRTase-like protein 1 from Haloquadratum walsbyi (strain DSM 16854 / JCM 12705 / C23).